A 292-amino-acid polypeptide reads, in one-letter code: Ribosomal RNA small subunit methyltransferase A (292 aa).

Residues Asn28, Leu30, Gly55, Glu76, Asp101, and Asn126 each coordinate S-adenosyl-L-methionine.

This sequence belongs to the class I-like SAM-binding methyltransferase superfamily. rRNA adenine N(6)-methyltransferase family. RsmA subfamily.

The protein localises to the cytoplasm. It carries out the reaction adenosine(1518)/adenosine(1519) in 16S rRNA + 4 S-adenosyl-L-methionine = N(6)-dimethyladenosine(1518)/N(6)-dimethyladenosine(1519) in 16S rRNA + 4 S-adenosyl-L-homocysteine + 4 H(+). In terms of biological role, specifically dimethylates two adjacent adenosines (A1518 and A1519) in the loop of a conserved hairpin near the 3'-end of 16S rRNA in the 30S particle. May play a critical role in biogenesis of 30S subunits. The sequence is that of Ribosomal RNA small subunit methyltransferase A from Bacillus cytotoxicus (strain DSM 22905 / CIP 110041 / 391-98 / NVH 391-98).